A 349-amino-acid chain; its full sequence is Heat-inducible transcription repressor HrcA (349 aa).

Belongs to the HrcA family.

Its function is as follows. Negative regulator of class I heat shock genes (grpE-dnaK-dnaJ and groELS operons). Prevents heat-shock induction of these operons. The protein is Heat-inducible transcription repressor HrcA of Mycoplasmoides gallisepticum (strain R(low / passage 15 / clone 2)) (Mycoplasma gallisepticum).